The chain runs to 340 residues: Coproporphyrin III ferrochelatase (340 aa).

Ser-52 and Tyr-121 together coordinate Fe-coproporphyrin III. 2 residues coordinate Fe(2+): His-177 and Glu-260.

Belongs to the ferrochelatase family.

The protein resides in the cytoplasm. It catalyses the reaction Fe-coproporphyrin III + 2 H(+) = coproporphyrin III + Fe(2+). The protein operates within porphyrin-containing compound metabolism; protoheme biosynthesis. Involved in coproporphyrin-dependent heme b biosynthesis. Catalyzes the insertion of ferrous iron into coproporphyrin III to form Fe-coproporphyrin III. The polypeptide is Coproporphyrin III ferrochelatase (Mycobacteroides abscessus (strain ATCC 19977 / DSM 44196 / CCUG 20993 / CIP 104536 / JCM 13569 / NCTC 13031 / TMC 1543 / L948) (Mycobacterium abscessus)).